The following is a 348-amino-acid chain: Alcohol dehydrogenase 2 (348 aa).

The Zn(2+) site is built by C44, H67, C98, C101, C104, C112, and C154. NAD(+) is bound by residues 178 to 184, D202, K207, 269 to 271, and R341; these read GAAGGLG and VGL.

It belongs to the zinc-containing alcohol dehydrogenase family. As to quaternary structure, homotetramer. It depends on Zn(2+) as a cofactor.

The protein localises to the cytoplasm. The catalysed reaction is a primary alcohol + NAD(+) = an aldehyde + NADH + H(+). It catalyses the reaction a secondary alcohol + NAD(+) = a ketone + NADH + H(+). The chain is Alcohol dehydrogenase 2 (ADH2) from Candida albicans (strain SC5314 / ATCC MYA-2876) (Yeast).